Reading from the N-terminus, the 244-residue chain is Tyrosine recombinase XerD-like (244 aa).

The Core-binding (CB) domain maps to 1–73 (MRDRISAFLE…ACNQFLYFLY (73 aa)). The region spanning 90–244 (AEKKTEKPEI…KTVLTLEKYR (155 aa)) is the Tyr recombinase domain. Active-site residues include Lys-150 and Arg-211. The active-site O-(3'-phospho-DNA)-tyrosine intermediate is the Tyr-243.

The protein belongs to the 'phage' integrase family. XerD-like subfamily.

Its subcellular location is the cytoplasm. Putative tyrosine recombinase. Not involved in the cutting and rejoining of the recombining DNA molecules on dif(SL) site. This is Tyrosine recombinase XerD-like from Streptococcus pneumoniae serotype 2 (strain D39 / NCTC 7466).